Consider the following 394-residue polypeptide: Exodeoxyribonuclease 7 large subunit (394 aa).

This sequence belongs to the XseA family. As to quaternary structure, heterooligomer composed of large and small subunits.

Its subcellular location is the cytoplasm. The enzyme catalyses Exonucleolytic cleavage in either 5'- to 3'- or 3'- to 5'-direction to yield nucleoside 5'-phosphates.. Bidirectionally degrades single-stranded DNA into large acid-insoluble oligonucleotides, which are then degraded further into small acid-soluble oligonucleotides. This chain is Exodeoxyribonuclease 7 large subunit, found in Thermotoga petrophila (strain ATCC BAA-488 / DSM 13995 / JCM 10881 / RKU-1).